The following is a 92-amino-acid chain: Large ribosomal subunit protein bL25 (92 aa).

It belongs to the bacterial ribosomal protein bL25 family. In terms of assembly, part of the 50S ribosomal subunit; part of the 5S rRNA/L5/L18/L25 subcomplex. Contacts the 5S rRNA. Binds to the 5S rRNA independently of L5 and L18.

In terms of biological role, this is one of the proteins that binds to the 5S RNA in the ribosome where it forms part of the central protuberance. This chain is Large ribosomal subunit protein bL25, found in Photobacterium profundum (strain SS9).